Reading from the N-terminus, the 597-residue chain is Gigaxonin (597 aa).

The BTB domain occupies 30-99 (CDAHLVLDGE…IFSGQIRLNE (70 aa)). Positions 134–236 (CIGIRDFALH…DSSYLREQML (103 aa)) constitute a BACK domain. Kelch repeat units lie at residues 274-326 (CIVT…SAEG), 327-374 (FLFV…EIDG), 376-421 (LYIL…AMKK), 422-468 (KIYA…GVAM), 470-522 (LYVF…VYGA), and 528-574 (SIYV…AALR).

As to quaternary structure, interacts with TBCB. Interacts with CUL3. Part of a complex that contains CUL3, RBX1 and GAN. Interacts (via BTB domain) with UBA1. Interacts (via Kelch domains) with MAP1B (via C-terminus) and MAP1S (via C-terminus). Post-translationally, ubiquitinated by E3 ubiquitin ligase complex formed by CUL3 and RBX1 and probably targeted for proteasome-independent degradation. In terms of tissue distribution, expressed in brain, heart and muscle.

It localises to the cytoplasm. The protein resides in the cytoskeleton. It functions in the pathway protein modification; protein ubiquitination. Functionally, probable cytoskeletal component that directly or indirectly plays an important role in neurofilament architecture. May act as a substrate-specific adapter of an E3 ubiquitin-protein ligase complex which mediates the ubiquitination and subsequent proteasomal degradation of target proteins. Controls degradation of TBCB. Controls degradation of MAP1B and MAP1S, and is critical for neuronal maintenance and survival. The sequence is that of Gigaxonin (GAN) from Homo sapiens (Human).